The sequence spans 94 residues: Late cornified envelope-like proline-rich protein 1 (94 aa).

Disordered stretches follow at residues 1–26 and 47–94; these read MSSD…CEQK and CPRE…PPPE. Positions 53–94 are enriched in pro residues; that stretch reads PAPPKCPPCPSPSPSSCPPKPCAKPCPPKCPSSCPPPCPPPE.

It belongs to the cornifin (SPRR) family.

This Macaca fascicularis (Crab-eating macaque) protein is Late cornified envelope-like proline-rich protein 1 (LELP1).